Reading from the N-terminus, the 107-residue chain is Putative double-stranded DNA mimic protein ECA2319 (107 aa).

Belongs to the putative dsDNA mimic protein family.

Its function is as follows. May act as a double-stranded DNA (dsDNA) mimic. Probably regulates the activity of a dsDNA-binding protein. In Pectobacterium atrosepticum (strain SCRI 1043 / ATCC BAA-672) (Erwinia carotovora subsp. atroseptica), this protein is Putative double-stranded DNA mimic protein ECA2319.